Consider the following 434-residue polypeptide: Putative nuclease OPG089 (434 aa).

The Mg(2+) site is built by Asp-33, Asp-74, Glu-168, Asp-170, Asp-196, and Asp-198.

This sequence belongs to the XPG/RAD2 endonuclease family. FEN1 subfamily. The cofactor is Mg(2+).

It is found in the virion. Its function is as follows. Putative nuclease that seems to be required for double-strand break repair, homologous recombination, and production of full-length viral genomic DNA. The sequence is that of Putative nuclease OPG089 (OPG089) from Vaccinia virus (strain Western Reserve) (VACV).